The sequence spans 132 residues: Nickel-responsive regulator (132 aa).

Ni(2+) contacts are provided by histidine 76, histidine 87, histidine 89, and cysteine 95.

The protein belongs to the transcriptional regulatory CopG/NikR family. As to quaternary structure, homotetramer. Ni(2+) is required as a cofactor.

Transcriptional repressor of the nikABCDE operon. Is active in the presence of excessive concentrations of intracellular nickel. The sequence is that of Nickel-responsive regulator from Klebsiella pneumoniae subsp. pneumoniae (strain ATCC 700721 / MGH 78578).